Here is a 101-residue protein sequence, read N- to C-terminus: MADFLKGLPVYNESNFSRFHADSVCKASNRRPSVYLPTREYPSDQIIVTEKTNILLRYLHQQWDKKNAAKKRDQDQLEIGETSAPPRKIARTDSQEMSEDT.

Positions 67 to 101 (NAAKKRDQDQLEIGETSAPPRKIARTDSQEMSEDT) are disordered.

Belongs to the DDA1 family. As to quaternary structure, component of numerous DCX (DDB1-CUL4-X-box) E3 ubiquitin-protein ligase complexes which consist of a core of DDB1, cullin-4 (CUL4A or CUL4B), DDA1 and RBX1.

The protein operates within protein modification; protein ubiquitination. Its function is as follows. Functions as a component of numerous distinct DCX (DDB1-CUL4-X-box) E3 ubiquitin-protein ligase complexes which mediate the ubiquitination and subsequent proteasomal degradation of target proteins. In the DCX complexes, acts as a scaffolding subunit required to stabilize the complex. The chain is DET1- and DDB1-associated protein 1 from Xenopus tropicalis (Western clawed frog).